Reading from the N-terminus, the 108-residue chain is Nucleoid-associated protein PSHAa1202 (108 aa).

Disordered regions lie at residues 1–20 (MFKGGMGNMMKQAQQMQDRM) and 87–108 (TQERMGKVTGGMQLPPGMKMPF).

The protein belongs to the YbaB/EbfC family. Homodimer.

The protein resides in the cytoplasm. The protein localises to the nucleoid. Its function is as follows. Binds to DNA and alters its conformation. May be involved in regulation of gene expression, nucleoid organization and DNA protection. In Pseudoalteromonas translucida (strain TAC 125), this protein is Nucleoid-associated protein PSHAa1202.